The following is a 129-amino-acid chain: Large ribosomal subunit protein bL20 (129 aa).

This sequence belongs to the bacterial ribosomal protein bL20 family.

In terms of biological role, binds directly to 23S ribosomal RNA and is necessary for the in vitro assembly process of the 50S ribosomal subunit. It is not involved in the protein synthesizing functions of that subunit. The chain is Large ribosomal subunit protein bL20 from Rhodococcus jostii (strain RHA1).